Here is a 198-residue protein sequence, read N- to C-terminus: Basic helix-loop-helix transcription factor amos (198 aa).

The interval 76–131 (EQQQHHLQANPLGKNQGRSPRYWNKQQRSKPYDKLSTSMSSSTSSASSSSSSSAGF) is disordered. A compositionally biased stretch (low complexity) spans 111–129 (STSMSSSTSSASSSSSSSA). The region spanning 138-190 (KRRLAANARERRRMNSLNDAFDKLRDVVPSLGHDRRLSKYETLQMAQAYIGDL) is the bHLH domain.

As to quaternary structure, efficient DNA binding requires dimerization with another bHLH protein. Interacts with Daughterless (da). During embryonic development, expression is seen in a small cluster of ectodermal cells during stage 10 which becomes restricted to 1 cell by stage 11. Expression is lost from this cell in the thorax and then the abdomen. Later expression is restricted to sensory organ precursors. Very transient expression was detected in distal leg disks at approximately 0-4 hours after puparium formation (APF), correlating with the anlage of the innervated tarsal claw.

It is found in the nucleus. In terms of biological role, transcription factor involved in early neurogenesis; sensillum basiconica formation and maybe sensillum trichodea development. Promotes multiple dendritic (MD) neuron formation. Required for olfactory sensilla; regulated by lozenge (lz). The chain is Basic helix-loop-helix transcription factor amos (amos) from Drosophila melanogaster (Fruit fly).